A 355-amino-acid polypeptide reads, in one-letter code: MVREKVRVSTRTLQWKCVESREDSKRLYYGRFILSPLRKGQADTIAIGIRRALLGEIEGTCITRVKSKNVPHEYSTIAGIQESVHEILMNFKEIVLRSNLYGTCDASICVRGPGYVTAQDIILPPYVEIVDNTQHIASLTEPIDLCIGLQIERNRGYLMKMPHNSQDGSYPIDAVFMPVRNANHSIHSYGSGNEKHEILFLEIWTNGSLTPKEALHEACRNLIDLFIPFLHKEEETSPLEDNHHTVPLSPLTFHDKADKLRKRKKEIKKKIALKSIFIDQSELPKVYNCLKGSNLYTLLDLLNKSQEDLMKMEHLRLEDVNHILVILARKHFAIYLPNKKFEIDFEIYCYSIFFH.

The interval 1-233 (MVREKVRVST…DLFIPFLHKE (233 aa)) is alpha N-terminal domain (alpha-NTD). Residues 268–355 (KKKIALKSIF…EIYCYSIFFH (88 aa)) are alpha C-terminal domain (alpha-CTD).

It belongs to the RNA polymerase alpha chain family. In terms of assembly, in plastids the minimal PEP RNA polymerase catalytic core is composed of four subunits: alpha, beta, beta', and beta''. When a (nuclear-encoded) sigma factor is associated with the core the holoenzyme is formed, which can initiate transcription.

It localises to the plastid. It is found in the chloroplast. The enzyme catalyses RNA(n) + a ribonucleoside 5'-triphosphate = RNA(n+1) + diphosphate. In terms of biological role, DNA-dependent RNA polymerase catalyzes the transcription of DNA into RNA using the four ribonucleoside triphosphates as substrates. This chain is DNA-directed RNA polymerase subunit alpha, found in Jasminum nudiflorum (Winter jasmine).